The sequence spans 376 residues: DNA replication and repair protein RecF (376 aa).

An ATP-binding site is contributed by 30-37 (GNNAQGKS).

It belongs to the RecF family.

The protein resides in the cytoplasm. Functionally, the RecF protein is involved in DNA metabolism; it is required for DNA replication and normal SOS inducibility. RecF binds preferentially to single-stranded, linear DNA. It also seems to bind ATP. This Trichormus variabilis (strain ATCC 29413 / PCC 7937) (Anabaena variabilis) protein is DNA replication and repair protein RecF.